We begin with the raw amino-acid sequence, 130 residues long: Mini-ribonuclease 3 (130 aa).

Residue D19 is part of the active site. Positions 69–91 (EQDVVRRGRNAKGHGAPKSADPA) are disordered.

The protein belongs to the MrnC RNase family. As to quaternary structure, homodimer. Mg(2+) serves as cofactor.

It localises to the cytoplasm. Its function is as follows. Involved in correct processing of both the 5' and 3' ends of 23S rRNA precursor. Processes 30S rRNA precursor transcript even in absence of ribonuclease 3 (Rnc); Rnc processes 30S rRNA into smaller rRNA precursors. In Symbiobacterium thermophilum (strain DSM 24528 / JCM 14929 / IAM 14863 / T), this protein is Mini-ribonuclease 3.